Consider the following 473-residue polypeptide: Arginine biosynthesis bifunctional protein ArgJ, mitochondrial (473 aa).

Thr201, Lys230, Thr241, Glu328, Asn468, and Thr473 together coordinate substrate. The active-site Nucleophile is the Thr241.

The protein belongs to the ArgJ family. In terms of assembly, heterodimer of an alpha and a beta chain. In terms of processing, the alpha and beta chains are autoproteolytically processed from a single precursor protein within the mitochondrion.

It localises to the mitochondrion matrix. It catalyses the reaction N(2)-acetyl-L-ornithine + L-glutamate = N-acetyl-L-glutamate + L-ornithine. The catalysed reaction is L-glutamate + acetyl-CoA = N-acetyl-L-glutamate + CoA + H(+). It participates in amino-acid biosynthesis; L-arginine biosynthesis; L-ornithine and N-acetyl-L-glutamate from L-glutamate and N(2)-acetyl-L-ornithine (cyclic): step 1/1. It functions in the pathway amino-acid biosynthesis; L-arginine biosynthesis; N(2)-acetyl-L-ornithine from L-glutamate: step 1/4. In terms of biological role, catalyzes two activities which are involved in the cyclic version of arginine biosynthesis: the synthesis of acetylglutamate from glutamate and acetyl-CoA, and of ornithine by transacetylation between acetylornithine and glutamate. The chain is Arginine biosynthesis bifunctional protein ArgJ, mitochondrial from Paracoccidioides brasiliensis (strain Pb18).